The chain runs to 841 residues: Alpha-glucan phosphorylase 2, cytosolic (841 aa).

The segment at 1-24 (MANANGKAATSLPEKISAKANPEA) is disordered. The residue at position 687 (Lys-687) is an N6-(pyridoxal phosphate)lysine.

The protein belongs to the glycogen phosphorylase family. It depends on pyridoxal 5'-phosphate as a cofactor.

It is found in the cytoplasm. The catalysed reaction is [(1-&gt;4)-alpha-D-glucosyl](n) + phosphate = [(1-&gt;4)-alpha-D-glucosyl](n-1) + alpha-D-glucose 1-phosphate. Functionally, phosphorylase is an important allosteric enzyme in carbohydrate metabolism. Enzymes from different sources differ in their regulatory mechanisms and in their natural substrates. However, all known phosphorylases share catalytic and structural properties. This is Alpha-glucan phosphorylase 2, cytosolic (PHS2) from Arabidopsis thaliana (Mouse-ear cress).